The sequence spans 411 residues: LL-diaminopimelate aminotransferase (411 aa).

Positions 15 and 42 each coordinate substrate. Pyridoxal 5'-phosphate is bound by residues Y72, 105 to 106 (SK), Y129, N186, Y217, and 245 to 247 (SFS). Positions 106, 129, and 186 each coordinate substrate. K248 is subject to N6-(pyridoxal phosphate)lysine. 2 residues coordinate pyridoxal 5'-phosphate: R256 and N287. Positions 287 and 382 each coordinate substrate.

The protein belongs to the class-I pyridoxal-phosphate-dependent aminotransferase family. LL-diaminopimelate aminotransferase subfamily. As to quaternary structure, homodimer. It depends on pyridoxal 5'-phosphate as a cofactor.

The catalysed reaction is (2S,6S)-2,6-diaminopimelate + 2-oxoglutarate = (S)-2,3,4,5-tetrahydrodipicolinate + L-glutamate + H2O + H(+). The protein operates within amino-acid biosynthesis; L-lysine biosynthesis via DAP pathway; LL-2,6-diaminopimelate from (S)-tetrahydrodipicolinate (aminotransferase route): step 1/1. Functionally, involved in the synthesis of meso-diaminopimelate (m-DAP or DL-DAP), required for both lysine and peptidoglycan biosynthesis. Catalyzes the direct conversion of tetrahydrodipicolinate to LL-diaminopimelate. Is also able to use meso-diaminopimelate, lysine or ornithine as substrates. This Protochlamydia amoebophila (strain UWE25) protein is LL-diaminopimelate aminotransferase.